A 494-amino-acid polypeptide reads, in one-letter code: tRNA-2-methylthio-N(6)-dimethylallyladenosine synthase (494 aa).

The MTTase N-terminal domain occupies 12–131; it reads PTYRVVTYGC…LPVLLKRARH (120 aa). [4Fe-4S] cluster is bound by residues Cys-21, Cys-60, Cys-94, Cys-168, Cys-172, and Cys-175. Positions 154–385 constitute a Radical SAM core domain; that stretch reads RDSAYSAWVS…ELVDDIAWQE (232 aa). The 71-residue stretch at 387–457 folds into the TRAM domain; sequence KAQVGRAVEV…PHHLVADGGL (71 aa).

The protein belongs to the methylthiotransferase family. MiaB subfamily. Monomer. [4Fe-4S] cluster is required as a cofactor.

Its subcellular location is the cytoplasm. It catalyses the reaction N(6)-dimethylallyladenosine(37) in tRNA + (sulfur carrier)-SH + AH2 + 2 S-adenosyl-L-methionine = 2-methylsulfanyl-N(6)-dimethylallyladenosine(37) in tRNA + (sulfur carrier)-H + 5'-deoxyadenosine + L-methionine + A + S-adenosyl-L-homocysteine + 2 H(+). In terms of biological role, catalyzes the methylthiolation of N6-(dimethylallyl)adenosine (i(6)A), leading to the formation of 2-methylthio-N6-(dimethylallyl)adenosine (ms(2)i(6)A) at position 37 in tRNAs that read codons beginning with uridine. This Cutibacterium acnes (strain DSM 16379 / KPA171202) (Propionibacterium acnes) protein is tRNA-2-methylthio-N(6)-dimethylallyladenosine synthase.